A 76-amino-acid chain; its full sequence is Peptide ARACIN 1 (76 aa).

An N-terminal signal peptide occupies residues methionine 1–alanine 22. The propeptide at arginine 23–proline 35 is removed in mature form. A SxS motif essential for MIK2 binding motif is present at residues serine 36–serine 38. The SCOOP motif signature appears at serine 36–serine 49. The disordered stretch occupies residues alanine 56–proline 76. Residues leucine 64–proline 76 show a composition bias toward polar residues.

Belongs to the serine rich endogenous peptide (SCOOP) phytocytokine family. In terms of assembly, interacts with MIK2 (via extracellular leucine-rich repeat domain); this interaction triggers the formation of complex between MIK2 and the BAK1/SERK3 and SERK4 coreceptors, and subsequent BAK1 activation by phosphorylation. As to expression, mainly expressed in young developing leaves, hydathodes, immature flowers and elongating pollen tubes.

It is found in the cell membrane. Its subcellular location is the secreted. The protein localises to the extracellular space. It localises to the apoplast. The protein resides in the endoplasmic reticulum. Its function is as follows. Brassicaceae-specific phytocytokine (plant endogenous peptide released into the apoplast) perceived by MIK2 in a BAK1/SERK3 and SERK4 coreceptors-dependent manner, that modulates various physiological and antimicrobial processes including growth prevention and reactive oxygen species (ROS) response regulation. Inhibits the fungal growth of Alternaria brassicicola, Sclerotinia sclerotiorum, Fusarium graminearum, yeast (Saccharomyces) and Botrytis cinerea, thus being an antimicrobial peptide (AMP). Promotes resistance to A.brassicicola and B.cinerea. This Arabidopsis thaliana (Mouse-ear cress) protein is Peptide ARACIN 1.